The sequence spans 1224 residues: MLPYTVNFKVSARTLTGALNAHNKAAVDWGWQGLIAYGCHSLVVVIDSITAQTLQVLEKHKADVVKVKWARENYHHNIGSPYCLRLASADVNGKIIVWDVAAGVAQCEIQEHAKPIQDVQWLWNQDASRDLLLAIHPPNYIVLWNADTGTKLWKKSYADNILSFSFDPFDPSHLTLLTSEGIVFISDFSPSKPPSGPGKKVYISSPHSSPAHNKLATATGAKKALNKVKILITQEKPSAEFITLNDCLQLAYLPSKRNHMLLLYPREILILDLEVNQTVGVIAIERTGVPFLQVIPCFQRDGLFCLHENGCITLRVRRSYNNIFTTSNEEPDPDPVQELTYDLRSQCDAIRVTKTVRPFSMVCCPVNENAAALVVSDGRVMIWELKSAVCNRNSRNSSSGVSPLYSPVSFCGIPVGVLQNKLPDLSLDNMIGQSAIAGEEHPRGSILREVHLKFLLTGLLSGLPAPQFAIRMCPPLTTKNIKMYQPLLAVGTSNGSVLVYHLTSGLLHKELSIHSCEVKGIEWTSLTSFLSFATSTPNNMGLVRNELQLVDLPTGRSIAFRGERGNDESAIEMIKVSHLKQYLAVVFRDKPLELWDVRTCTLLREMSKNFPTITALEWSPSHNLKSLRKKQLATREAMARQTVVSDTELSIVESSVISLLQEAESKSELSQNISAREHFVFTDIDGQVYHLTVEGNSVKDSARIPPDGSMGSITCIAWKGDTLVLGDMDGNLNFWDLKGRVSRGIPTHRSWVRKIRFAPGKGNQKLIAMYNDGAEVWDTKEVQMVSSLRSGRNVTFRILDVDWCTSDKVILASDDGCIRVLEMSMKSACFRMDEQELTEPVWCPYLLVPRASLALKAFLLHQPWNGQYSLDISHVDYPENEEIKNLLQEQLNSLSNDIKKLLLDPEFTLLQRCLLVSRLYGDESELHFWTVAAHYLHSLSQEKSASTTAPKEAAPRDKLSNPLDICYDVLCENAYFQKFQLERVNLQEVKRSTYDHTRKCTDQLLLLGQTDRAVQLLLETSADNQHYYCDSLKACLVTTVTSSGPSQSTIKLVATNMIANGKLAEGVQLLCLIDKAADACRYLQTYGEWNRAAWLAKVRLNPEECADVLRRWVDHLCSPQVNQKSKALLVLLSLGCFFSVAETLHSMRYFDRAALFVEACLKYGAFEVTEDTEKLITAIYADYARSLKNLGFKQGAVLFASKAGAAGKDLLNELESPKEEPIEE.

WD repeat units follow at residues 59-108 and 111-154; these read KHKA…AQCE and EHAK…KLWK. Phosphoserine occurs at positions 205 and 209. A WD 3 repeat occupies 354-393; the sequence is KTVRPFSMVCCPVNENAAALVVSDGRVMIWELKSAVCNRN. Residues S402 and S406 each carry the phosphoserine modification. WD repeat units lie at residues 471-510, 566-605, 708-745, 747-787, 793-831, and 893-940; these read RMCP…LHKE, NDES…LLRE, GSMG…SRGI, THRS…MVSS, NVTF…ACFR, and SLSN…HSLS.

In terms of assembly, component of the complex WDR11 composed of C17orf75, FAM91A1 and WDR11; FAM91A1 and WDR11 are required for proper location of the complex. Interacts (via the N-terminal and the central portion of the protein) with EMX1. Interacts with GLI3; the interaction associateS EMX1 with GLI3. Interacts with TBC1D23; this interaction may be indirect and recruits TBC1D23 to AP-1-derived vesicles. In terms of tissue distribution, ubiquitous.

Its subcellular location is the cytoplasm. It is found in the cytoskeleton. The protein resides in the cilium basal body. The protein localises to the nucleus. It localises to the cilium axoneme. Its subcellular location is the cytoplasmic vesicle. It is found in the golgi apparatus. The protein resides in the trans-Golgi network. Involved in the Hedgehog (Hh) signaling pathway, is essential for normal ciliogenesis. Regulates the proteolytic processing of GLI3 and cooperates with the transcription factor EMX1 in the induction of downstream Hh pathway gene expression and gonadotropin-releasing hormone production. WDR11 complex facilitates the tethering of Adaptor protein-1 complex (AP-1)-derived vesicles. WDR11 complex acts together with TBC1D23 to facilitate the golgin-mediated capture of vesicles generated using AP-1. This chain is WD repeat-containing protein 11 (WDR11), found in Homo sapiens (Human).